The chain runs to 216 residues: Ras-related protein RABA1b (216 aa).

20–27 (GDSGVGKS) is a GTP binding site. Positions 42 to 50 (SKSTIGVEF) match the Effector region motif. Residues 68–72 (DTAGQ), 126–129 (NKSD), and 156–157 (SA) each bind GTP. S-geranylgeranyl cysteine attachment occurs at residues Cys-213 and Cys-214.

This sequence belongs to the small GTPase superfamily. Rab family.

It localises to the cell membrane. Functionally, intracellular vesicle trafficking and protein transport. This chain is Ras-related protein RABA1b (RABA1B), found in Arabidopsis thaliana (Mouse-ear cress).